An 829-amino-acid polypeptide reads, in one-letter code: uncharacterized protein (829 aa).

Belongs to the IIV-6 050L family.

This is an uncharacterized protein from Invertebrate iridescent virus 3 (IIV-3).